A 388-amino-acid chain; its full sequence is Succinate--CoA ligase [ADP-forming] subunit beta (388 aa).

Residues 9-244 form the ATP-grasp domain; that stretch reads KQIFAQYGLP…PSQEDAREAA (236 aa). ATP contacts are provided by residues Lys46, 53-55, Glu99, Ala102, and Glu107; that span reads GRG. Mg(2+)-binding residues include Asn199 and Asp213. Substrate is bound by residues Asn264 and 321 to 323; that span reads GIV.

Belongs to the succinate/malate CoA ligase beta subunit family. As to quaternary structure, heterotetramer of two alpha and two beta subunits. It depends on Mg(2+) as a cofactor.

The catalysed reaction is succinate + ATP + CoA = succinyl-CoA + ADP + phosphate. The enzyme catalyses GTP + succinate + CoA = succinyl-CoA + GDP + phosphate. It functions in the pathway carbohydrate metabolism; tricarboxylic acid cycle; succinate from succinyl-CoA (ligase route): step 1/1. Its function is as follows. Succinyl-CoA synthetase functions in the citric acid cycle (TCA), coupling the hydrolysis of succinyl-CoA to the synthesis of either ATP or GTP and thus represents the only step of substrate-level phosphorylation in the TCA. The beta subunit provides nucleotide specificity of the enzyme and binds the substrate succinate, while the binding sites for coenzyme A and phosphate are found in the alpha subunit. This Mannheimia succiniciproducens (strain KCTC 0769BP / MBEL55E) protein is Succinate--CoA ligase [ADP-forming] subunit beta.